The sequence spans 190 residues: Probable chemoreceptor glutamine deamidase CheD (190 aa).

This sequence belongs to the CheD family.

It catalyses the reaction L-glutaminyl-[protein] + H2O = L-glutamyl-[protein] + NH4(+). In terms of biological role, probably deamidates glutamine residues to glutamate on methyl-accepting chemotaxis receptors (MCPs), playing an important role in chemotaxis. This Acidiphilium cryptum (strain JF-5) protein is Probable chemoreceptor glutamine deamidase CheD.